A 102-amino-acid chain; its full sequence is uncharacterized protein (102 aa).

3 helical membrane-spanning segments follow: residues 1–21, 42–62, and 68–88; these read MVPL…LRPV, SIID…LILV, and SIHA…FSIV.

The protein localises to the membrane. This is an uncharacterized protein from Saccharomyces cerevisiae (strain ATCC 204508 / S288c) (Baker's yeast).